Consider the following 641-residue polypeptide: Protein BCAP (641 aa).

4 coiled-coil regions span residues 83-144, 191-270, 299-375, and 487-599; these read HWPV…KQND, EKDN…RKLE, QKQK…EREQ, and FKLE…TLNA.

This sequence belongs to the ODF2 family.

Its subcellular location is the cytoplasm. It localises to the cytoskeleton. The protein localises to the microtubule organizing center. The protein resides in the centrosome. It is found in the centriole. Its subcellular location is the centriolar satellite. It localises to the cilium basal body. Functionally, acts as a suppressor of ciliogenesis, specifically, the initiation of ciliogenesis. The chain is Protein BCAP (odf2l) from Xenopus laevis (African clawed frog).